A 160-amino-acid polypeptide reads, in one-letter code: Large ribosomal subunit protein uL30m (160 aa).

Residues 1–34 (MAGVLRSVFQRPPGRLQTVKKGAESLIGTEWIRH) constitute a mitochondrion transit peptide. The tract at residues 45 to 64 (VFQPRPEDHEKYGGDPQNPH) is disordered.

The protein belongs to the universal ribosomal protein uL30 family. In terms of assembly, component of the mitochondrial ribosome large subunit (39S) which comprises a 16S rRNA and about 50 distinct proteins.

It is found in the mitochondrion. The sequence is that of Large ribosomal subunit protein uL30m (Mrpl30) from Rattus norvegicus (Rat).